Reading from the N-terminus, the 513-residue chain is Microcin J25-processing protein McjC (513 aa).

The Asparagine synthetase domain occupies 176-436; that stretch reads STIDSIIDNI…FGSDIFWKKT (261 aa).

It is found in the cytoplasm. Along with McjB, necessary and sufficient to process the inactive microcin J25 (McjA) precursor into the active peptide. May be involved in the formation of the amide bond between Gly-38 and Glu-53 of McjA. This Escherichia coli protein is Microcin J25-processing protein McjC (mcjC).